The sequence spans 146 residues: 3-dehydroquinate dehydratase (146 aa).

Catalysis depends on Y23, which acts as the Proton acceptor. Positions 74, 80, and 87 each coordinate substrate. Catalysis depends on H100, which acts as the Proton donor. Substrate contacts are provided by residues 101 to 102 and R111; that span reads IS.

It belongs to the type-II 3-dehydroquinase family. In terms of assembly, homododecamer.

The enzyme catalyses 3-dehydroquinate = 3-dehydroshikimate + H2O. It functions in the pathway metabolic intermediate biosynthesis; chorismate biosynthesis; chorismate from D-erythrose 4-phosphate and phosphoenolpyruvate: step 3/7. Catalyzes a trans-dehydration via an enolate intermediate. The sequence is that of 3-dehydroquinate dehydratase from Bacillus cereus (strain ATCC 14579 / DSM 31 / CCUG 7414 / JCM 2152 / NBRC 15305 / NCIMB 9373 / NCTC 2599 / NRRL B-3711).